The sequence spans 542 residues: Protein MPA43 (542 aa).

The sequence is that of Protein MPA43 (MPA43) from Saccharomyces cerevisiae (strain ATCC 204508 / S288c) (Baker's yeast).